A 549-amino-acid chain; its full sequence is MFLRFIEEVIKALGEYGDKKFLRESEHADLASTIAFKLAKERKKSPKEIADEIVENLEVESEYIGSVESVNGYINFFASYEFLEDTVNVILDEDENYGHLNLKGEILIEHTSANPDGPLHIGHIRNSIIGDTIARIFAKAGFDVKTHYYVNDMGRQTAITVLGIEKFGLKDKKPDHAVAEAYIEANKLLESNPELEEQVEKLMLAYEEGDEKTVEKFRRAVETALEGIKQTLKTINVEHDEFVWESEFVRNGYVGKVLGILEERGLVKKNGAWTIELEGFDKEVVLRRENGTTLYITRDLAYHMWKNENYERFINVLGADHKLYGAQLSKILELLGLKPPEIIFFEFVSLPEGSMSTRRGKFISADELISKVRDEAWKILSERDMEEDEKRKIADAVAVGAIRFDFIKIAPEKHMTFDWSKALDFERQTASYIQYSHARACSILRKAVEDGMPELEFKGELCTAGERKLVMLLSKMPYVVKRIVSELRPNVFAEYLLSVAGTFNDFYRDHPVLKAESEVRMHRLAIVDATRVVLRNGLELLGIEPLERM.

A 'HIGH' region motif is present at residues 113–123 (ANPDGPLHIGH).

Belongs to the class-I aminoacyl-tRNA synthetase family.

The protein localises to the cytoplasm. It catalyses the reaction tRNA(Arg) + L-arginine + ATP = L-arginyl-tRNA(Arg) + AMP + diphosphate. The polypeptide is Arginine--tRNA ligase (argS) (Archaeoglobus fulgidus (strain ATCC 49558 / DSM 4304 / JCM 9628 / NBRC 100126 / VC-16)).